A 143-amino-acid polypeptide reads, in one-letter code: Large ribosomal subunit protein uL13 (143 aa).

This sequence belongs to the universal ribosomal protein uL13 family. In terms of assembly, part of the 50S ribosomal subunit.

Its function is as follows. This protein is one of the early assembly proteins of the 50S ribosomal subunit, although it is not seen to bind rRNA by itself. It is important during the early stages of 50S assembly. In Chloroflexus aggregans (strain MD-66 / DSM 9485), this protein is Large ribosomal subunit protein uL13.